The primary structure comprises 150 residues: UPF0178 protein Bcep1808_1605 (150 aa).

It belongs to the UPF0178 family.

The polypeptide is UPF0178 protein Bcep1808_1605 (Burkholderia vietnamiensis (strain G4 / LMG 22486) (Burkholderia cepacia (strain R1808))).